We begin with the raw amino-acid sequence, 271 residues long: UPF0758 protein ACIAD3126 (271 aa).

The region spanning 120-242 is the MPN domain; sequence NLNSSRLVLD…TFSFAERALL (123 aa). Positions 191, 193, and 204 each coordinate Zn(2+). The JAMM motif motif lies at 191–204; that stretch reads HNHPFGKAEPSAAD.

It belongs to the UPF0758 family.

In Acinetobacter baylyi (strain ATCC 33305 / BD413 / ADP1), this protein is UPF0758 protein ACIAD3126.